The sequence spans 262 residues: Ribosomal RNA small subunit methyltransferase G (262 aa).

S-adenosyl-L-methionine-binding residues include Gly-72, Leu-77, and Arg-142. A disordered region spans residues 212-262 (RSSQLSRAEGRKGRGDGERHDGRQVRRTARDSRRSREVDRDQPTRGQSRST). The segment covering 219-254 (AEGRKGRGDGERHDGRQVRRTARDSRRSREVDRDQP) has biased composition (basic and acidic residues).

The protein belongs to the methyltransferase superfamily. RNA methyltransferase RsmG family.

Its subcellular location is the cytoplasm. Specifically methylates the N7 position of guanine in position 518 of 16S rRNA. The polypeptide is Ribosomal RNA small subunit methyltransferase G (Frankia alni (strain DSM 45986 / CECT 9034 / ACN14a)).